We begin with the raw amino-acid sequence, 852 residues long: DNA double-strand break repair Rad50 ATPase (852 aa).

The ATP site is built by asparagine 32, glycine 33, alanine 34, glycine 35, lysine 36, serine 37, serine 38, arginine 53, tyrosine 54, aspartate 59, valine 61, and arginine 63. Serine 37 is a Mg(2+) binding site. Glutamine 142 contributes to the Mg(2+) binding site. Coiled-coil stretches lie at residues 155–345 (EITE…EELD) and 389–427 (LLSI…QIAS). The Zinc-hook domain occupies 389–488 (LLSIEKTENE…SLSSLIEDLL (100 aa)). Cysteine 435 and cysteine 438 together coordinate Zn(2+). Coiled-coil stretches lie at residues 460–488 (DQKR…EDLL) and 534–711 (KIEE…LFDK). Mg(2+) is bound at residue aspartate 797.

Belongs to the SMC family. RAD50 subfamily. In terms of assembly, homodimer. Forms a complex with Mre11. Zn(2+) serves as cofactor.

It carries out the reaction ATP + H2O = ADP + phosphate + H(+). Its function is as follows. Involved in DNA double-strand break repair (DSBR). The Rad50/Mre11 complex possesses single-strand endonuclease activity and ATP-dependent double-strand-specific 3'-5' exonuclease activity. Rad50 provides an ATP-dependent control of Mre11 by positioning DNA ends into the Mre11 active site: ATP-binding induces a large structural change from an open form with accessible Mre11 nuclease sites into a closed form. The sequence is that of DNA double-strand break repair Rad50 ATPase from Thermotoga maritima (strain ATCC 43589 / DSM 3109 / JCM 10099 / NBRC 100826 / MSB8).